The chain runs to 256 residues: Small ribosomal subunit protein eS1 (256 aa).

The segment covering 1–18 (MAVGKNKRLSKGKKGIKK) has biased composition (basic residues). The interval 1-20 (MAVGKNKRLSKGKKGIKKRT) is disordered. An N-acetylalanine; partial modification is found at Ala2.

The protein belongs to the eukaryotic ribosomal protein eS1 family. As to quaternary structure, component of the small ribosomal subunit. Mature ribosomes consist of a small (40S) and a large (60S) subunit. The 40S subunit contains about 33 different proteins and 1 molecule of RNA (18S). The 60S subunit contains about 49 different proteins and 3 molecules of RNA (25S, 5.8S and 5S).

Its subcellular location is the cytoplasm. In Aspergillus terreus (strain NIH 2624 / FGSC A1156), this protein is Small ribosomal subunit protein eS1 (rps1).